We begin with the raw amino-acid sequence, 231 residues long: Dihydropteridine reductase (231 aa).

Position 6-30 (6-30) interacts with NADP(+); sequence LVLGGSGALGAEVVKFFKSKSWNTI. The active-site Proton acceptor is the tyrosine 138.

Belongs to the short-chain dehydrogenases/reductases (SDR) family. In terms of assembly, homodimer.

It catalyses the reaction 5,6,7,8-tetrahydropteridine + NAD(+) = 6,7-dihydropteridine + NADH + H(+). The catalysed reaction is 5,6,7,8-tetrahydropteridine + NADP(+) = 6,7-dihydropteridine + NADPH + H(+). The product of this enzyme, tetrahydrobiopterin (BH-4), is an essential cofactor for phenylalanine, tyrosine, and tryptophan hydroxylases. The sequence is that of Dihydropteridine reductase (qdpr) from Dictyostelium discoideum (Social amoeba).